The primary structure comprises 643 residues: Probable extracellular metalloproteinase 4 (643 aa).

The N-terminal stretch at 1–18 (MHGLLLAGLLALPLNVLA) is a signal peptide. Residues 19–254 (HPTESHSSGV…VHSVVDYVSA (236 aa)) constitute a propeptide that is removed on maturation. A compositionally biased stretch (basic and acidic residues) spans 47–57 (TKSDAVPKQDG). A disordered region spans residues 47–69 (TKSDAVPKQDGESFTTSSTGDDN). Polar residues predominate over residues 58 to 69 (ESFTTSSTGDDN). 2 N-linked (GlcNAc...) asparagine glycosylation sites follow: asparagine 271 and asparagine 420. Residue histidine 437 participates in Zn(2+) binding. The active site involves glutamate 438. Histidine 441 is a Zn(2+) binding site. N-linked (GlcNAc...) asparagine glycans are attached at residues asparagine 603 and asparagine 629.

It belongs to the peptidase M36 family. Requires Zn(2+) as cofactor.

It localises to the secreted. In terms of biological role, secreted metalloproteinase probably acting as a virulence factor. This Arthroderma benhamiae (strain ATCC MYA-4681 / CBS 112371) (Trichophyton mentagrophytes) protein is Probable extracellular metalloproteinase 4 (MEP4).